The chain runs to 129 residues: Small ribosomal subunit protein uS9 (129 aa).

Residues 97-129 (LKAQGFLTRDPRKKERKKYGRKKARKSFQFSKR) are disordered. The segment covering 110–129 (KERKKYGRKKARKSFQFSKR) has biased composition (basic residues).

The protein belongs to the universal ribosomal protein uS9 family.

The polypeptide is Small ribosomal subunit protein uS9 (Chlamydia trachomatis serovar A (strain ATCC VR-571B / DSM 19440 / HAR-13)).